Here is a 577-residue protein sequence, read N- to C-terminus: Protein NUCLEOLAR COMPLEX ASSOCIATED 4 (577 aa).

Positions 230–263 (PEKQAEKSQHEMWSGSDESISEKPTDKKKKTEKG) are disordered. 3 consecutive transmembrane segments (helical) span residues 329–349 (IGGVVSVMALSSLFILMTQHG), 350–370 (LEYPFFYEKLYALLVPSVFVA), and 404–424 (LSLSIPPAGSLVITALIYNLL).

It belongs to the CBF/MAK21 family. In terms of assembly, component of the ribosomal small subunit (SSU) processome composed of at least 40 protein subunits and snoRNA U3. In terms of tissue distribution, mostly expressed in flowers and stems and at lower levels in roots, hypocotyls, siliques, leaves and seeds.

Its subcellular location is the nucleus membrane. The protein localises to the nucleus. It localises to the nucleolus. In terms of biological role, essential protein required during embryogenesis. Involved in nucleolar processing of ribosomal RNA (rRNA) 40S and 90S ribosomal subunits and ribosome assembly; early in ribosome biogenesis, especially required during the maturation of 5.8S rRNA. Has a role in the nuclear export of 40S pre-ribosomal subunit to the cytoplasm. The chain is Protein NUCLEOLAR COMPLEX ASSOCIATED 4 from Arabidopsis thaliana (Mouse-ear cress).